The following is a 54-amino-acid chain: UPF0391 membrane protein Oant_1245 (54 aa).

The next 2 helical transmembrane spans lie at Ala-5 to Gly-25 and Gly-29 to Ala-48.

The protein belongs to the UPF0391 family.

The protein resides in the cell membrane. In Brucella anthropi (strain ATCC 49188 / DSM 6882 / CCUG 24695 / JCM 21032 / LMG 3331 / NBRC 15819 / NCTC 12168 / Alc 37) (Ochrobactrum anthropi), this protein is UPF0391 membrane protein Oant_1245.